A 463-amino-acid chain; its full sequence is FAD-dependent monooxygenase ausM (463 aa).

3 residues coordinate FAD: Glu40, Gly54, and Arg113. Tyr217 is an active-site residue. FAD contacts are provided by Asp309 and Ala322. Residues 443–463 (VPWLVISLPVLASVLCYLMFA) form a helical membrane-spanning segment.

This sequence belongs to the paxM FAD-dependent monooxygenase family. FAD is required as a cofactor.

It localises to the membrane. Its pathway is secondary metabolite biosynthesis; terpenoid biosynthesis. FAD-dependent monooxygenase; part of the gene cluster that mediates the biosynthesis of calidodehydroaustin, a fungal meroterpenoid. The first step of the pathway is the synthesis of 3,5-dimethylorsellinic acid by the polyketide synthase ausA. 3,5-dimethylorsellinic acid is then prenylated by the polyprenyl transferase ausN. Further epoxidation by the FAD-dependent monooxygenase ausM and cyclization by the probable terpene cyclase ausL lead to the formation of protoaustinoid A. Protoaustinoid A is then oxidized to spiro-lactone preaustinoid A3 by the combined action of the FAD-binding monooxygenases ausB and ausC, and the dioxygenase ausE. Acid-catalyzed keto-rearrangement and ring contraction of the tetraketide portion of preaustinoid A3 by ausJ lead to the formation of preaustinoid A4. The aldo-keto reductase ausK, with the help of ausH, is involved in the next step by transforming preaustinoid A4 into isoaustinone which is in turn hydroxylated by the P450 monooxygenase ausI to form austinolide. The cytochrome P450 monooxygenase ausG modifies austinolide to austinol. Austinol is further acetylated to austin by the O-acetyltransferase ausP, which spontaneously changes to dehydroaustin. The cytochrome P450 monooxygenase ausR then converts dehydroaustin is into 7-dehydrodehydroaustin. The hydroxylation catalyzed by ausR permits the O-acetyltransferase ausQ to add an additional acetyl group to the molecule, leading to the formation of acetoxydehydroaustin. The short chain dehydrogenase ausT catalyzes the reduction of the double bond present between carbon atoms 1 and 2 to convert 7-dehydrodehydroaustin into 1,2-dihydro-7-hydroxydehydroaustin. AusQ catalyzes not only an acetylation reaction but also the addition of the PKS ausV diketide product to 1,2-dihydro-7-hydroxydehydroaustin, forming precalidodehydroaustin. Finally, the iron/alpha-ketoglutarate-dependent dioxygenase converts precalidodehydroaustin into calidodehydroaustin. The chain is FAD-dependent monooxygenase ausM from Aspergillus calidoustus.